Here is a 546-residue protein sequence, read N- to C-terminus: Chaperonin GroEL 1 (546 aa).

Residues 30–33 (TLGP), lysine 51, 87–91 (DGTTT), glycine 415, and aspartate 495 contribute to the ATP site. Positions 527-546 (DAAPTAAPGGPGAGGPGFDF) are disordered. Gly residues predominate over residues 535-546 (GGPGAGGPGFDF).

This sequence belongs to the chaperonin (HSP60) family. As to quaternary structure, forms a cylinder of 14 subunits composed of two heptameric rings stacked back-to-back. Interacts with the co-chaperonin GroES.

The protein localises to the cytoplasm. The enzyme catalyses ATP + H2O + a folded polypeptide = ADP + phosphate + an unfolded polypeptide.. Its function is as follows. Together with its co-chaperonin GroES, plays an essential role in assisting protein folding. The GroEL-GroES system forms a nano-cage that allows encapsulation of the non-native substrate proteins and provides a physical environment optimized to promote and accelerate protein folding. The sequence is that of Chaperonin GroEL 1 from Burkholderia lata (strain ATCC 17760 / DSM 23089 / LMG 22485 / NCIMB 9086 / R18194 / 383).